The primary structure comprises 226 residues: Potassium/proton antiporter CemA (226 aa).

The next 3 helical transmembrane spans lie at 7-27, 111-131, and 186-206; these read FTSLPYLASIVFLPWWISLSF, IICFAILSGYSILGNEGLFIL, and IISGLVSTFPVILDTILKYWI.

It belongs to the CemA family.

It is found in the plastid. The protein localises to the chloroplast inner membrane. The catalysed reaction is K(+)(in) + H(+)(out) = K(+)(out) + H(+)(in). Contributes to K(+)/H(+) antiport activity by supporting proton efflux to control proton extrusion and homeostasis in chloroplasts in a light-dependent manner to modulate photosynthesis. Prevents excessive induction of non-photochemical quenching (NPQ) under continuous-light conditions. Indirectly promotes efficient inorganic carbon uptake into chloroplasts. The chain is Potassium/proton antiporter CemA from Buxus microphylla (Littleleaf boxwood).